We begin with the raw amino-acid sequence, 218 residues long: N-(5'-phosphoribosyl)anthranilate isomerase (218 aa).

Belongs to the TrpF family.

The enzyme catalyses N-(5-phospho-beta-D-ribosyl)anthranilate = 1-(2-carboxyphenylamino)-1-deoxy-D-ribulose 5-phosphate. It participates in amino-acid biosynthesis; L-tryptophan biosynthesis; L-tryptophan from chorismate: step 3/5. This is N-(5'-phosphoribosyl)anthranilate isomerase from Rhodospirillum rubrum (strain ATCC 11170 / ATH 1.1.1 / DSM 467 / LMG 4362 / NCIMB 8255 / S1).